Reading from the N-terminus, the 596-residue chain is Histone deacetylase 9 (596 aa).

Composition is skewed to basic and acidic residues over residues 132-153 and 160-172; these read REKE…HRQE and RSKD…AVAS. Disordered stretches follow at residues 132–172, 214–258, 293–313, and 522–596; these read REKE…AVAS, HTSL…VRSR, SSVS…GPVA, and QPEG…QQVT. An interaction with mef2 region spans residues 172–222; that stretch reads STEVKQKLQEFILSKSATKEPLTNGTSHSMGRHPKLWYTAAHHTSLDQSSP. Over residues 221 to 237 the composition is skewed to pro residues; it reads SPPPSGTSPTYKCPPPG. Low complexity predominate over residues 293-312; the sequence is SSVSSSSPVSGPSSPNNGPV. Positions 522-536 are enriched in basic and acidic residues; it reads QPEGHLEEAEEDLHG. A compositionally biased stretch (polar residues) spans 541–558; the sequence is QEKSSSIDNTRSYSSTDL. Residues 567 to 585 show a composition bias toward basic and acidic residues; the sequence is KVKEEPPDSENEIKTHLQS. Polar residues predominate over residues 586 to 596; the sequence is EQKSVFAQQVT.

Belongs to the histone deacetylase family. HD type 2 subfamily. In terms of assembly, homodimer. Interacts with mef2. In terms of tissue distribution, broadly expressed.

Its subcellular location is the nucleus. The catalysed reaction is N(6)-acetyl-L-lysyl-[histone] + H2O = L-lysyl-[histone] + acetate. Its function is as follows. Devoided of intrinsic deacetylase activity, promotes the deacetylation of lysine residues on the N-terminal part of the core histones (H2A, H2B, H3 and H4) by recruiting other histone deacetylases. Histone deacetylation gives a tag for epigenetic repression and plays an important role in transcriptional regulation, cell cycle progression and developmental events. Represses MEF2-dependent transcription. This Xenopus laevis (African clawed frog) protein is Histone deacetylase 9 (hdac9).